A 385-amino-acid chain; its full sequence is Flap endonuclease 1 (385 aa).

Residues 1 to 105 (MGIKGLNAII…HELSKRSARR (105 aa)) form an N-domain region. D34 contacts Mg(2+). DNA is bound by residues R47 and R71. Mg(2+) is bound by residues D87, E156, E158, D177, and D179. Residues 120–251 (EKLKHERRLV…VTALKLIKEH (132 aa)) are I-domain. E156 serves as a coordination point for DNA. G229 and D231 together coordinate DNA. D231 provides a ligand contact to Mg(2+). The interval 338-346 (VQGRLDGFF) is interaction with PCNA. The segment covering 356–370 (LAAANAKAKSTKAGK) has biased composition (low complexity). The segment at 356-385 (LAAANAKAKSTKAGKQATKGKVGKPGRPRK) is disordered. Positions 376-385 (KVGKPGRPRK) are enriched in basic residues.

It belongs to the XPG/RAD2 endonuclease family. FEN1 subfamily. As to quaternary structure, interacts with PCNA. Three molecules of FEN1 bind to one PCNA trimer with each molecule binding to one PCNA monomer. PCNA stimulates the nuclease activity without altering cleavage specificity. Mg(2+) serves as cofactor. In terms of processing, phosphorylated. Phosphorylation upon DNA damage induces relocalization to the nuclear plasma.

It is found in the nucleus. It localises to the nucleolus. Its subcellular location is the nucleoplasm. The protein localises to the mitochondrion. Functionally, structure-specific nuclease with 5'-flap endonuclease and 5'-3' exonuclease activities involved in DNA replication and repair. During DNA replication, cleaves the 5'-overhanging flap structure that is generated by displacement synthesis when DNA polymerase encounters the 5'-end of a downstream Okazaki fragment. It enters the flap from the 5'-end and then tracks to cleave the flap base, leaving a nick for ligation. Also involved in the long patch base excision repair (LP-BER) pathway, by cleaving within the apurinic/apyrimidinic (AP) site-terminated flap. Acts as a genome stabilization factor that prevents flaps from equilibrating into structures that lead to duplications and deletions. Also possesses 5'-3' exonuclease activity on nicked or gapped double-stranded DNA, and exhibits RNase H activity. Also involved in replication and repair of rDNA and in repairing mitochondrial DNA. The protein is Flap endonuclease 1 of Lachancea thermotolerans (strain ATCC 56472 / CBS 6340 / NRRL Y-8284) (Yeast).